Here is a 359-residue protein sequence, read N- to C-terminus: Protein RecA (359 aa).

77 to 84 (GPESSGKT) serves as a coordination point for ATP.

This sequence belongs to the RecA family.

It is found in the cytoplasm. In terms of biological role, can catalyze the hydrolysis of ATP in the presence of single-stranded DNA, the ATP-dependent uptake of single-stranded DNA by duplex DNA, and the ATP-dependent hybridization of homologous single-stranded DNAs. It interacts with LexA causing its activation and leading to its autocatalytic cleavage. The chain is Protein RecA from Paramagnetospirillum magneticum (strain ATCC 700264 / AMB-1) (Magnetospirillum magneticum).